The chain runs to 572 residues: Glutathione hydrolase 1 (572 aa).

The signal sequence occupies residues 1–22; sequence MSLVRTVTIVLFIIAFLQNAAA. Arg99 is a binding site for L-glutamate. Residues Asn171 and Asn222 are each glycosylated (N-linked (GlcNAc...) asparagine). Thr368 serves as the catalytic Nucleophile. Residues Thr386, Asn388, Glu407, Asp410, 440 to 441, and 461 to 462 contribute to the L-glutamate site; these read SS and GG. Residue Asn505 is glycosylated (N-linked (GlcNAc...) asparagine). Residues 552-572 form a disordered region; it reads GGRSELVAVSDPRKGGFPSGY.

Belongs to the gamma-glutamyltransferase family. In terms of tissue distribution, expressed in embryo, roots and leaves. In mature plants, expression is restricted to vascular tissues of roots, leaves, flowers and siliques.

It localises to the secreted. It is found in the extracellular space. The protein resides in the apoplast. It catalyses the reaction an N-terminal (5-L-glutamyl)-[peptide] + an alpha-amino acid = 5-L-glutamyl amino acid + an N-terminal L-alpha-aminoacyl-[peptide]. The enzyme catalyses glutathione + H2O = L-cysteinylglycine + L-glutamate. It carries out the reaction an S-substituted glutathione + H2O = an S-substituted L-cysteinylglycine + L-glutamate. Its pathway is sulfur metabolism; glutathione metabolism. Functionally, may play a role in preventing oxidative stress by metabolizing extracellular oxidized glutathione (GSSG). The protein is Glutathione hydrolase 1 (GGT1) of Arabidopsis thaliana (Mouse-ear cress).